A 413-amino-acid chain; its full sequence is MDIEIIRKTDPEIADAIEKELIRQRNKIELIASENFVSRAVMEAMGSPLTNKYAEGYPNKRYYGGCEYVDIAEELARERLKKLFGAEHANVQPHSGAQANMAAYFALIKPGDTVLGMDLAHGGHLTHGSKVNFSGQIYNFVSYGVREDTGYIDYDEVERVAKKHKPKLIVAGASAYPRIIDFKRFREIADKVGAYLMVDMAHIAGLVAAGLHPNPVPYADVVTTTTHKTLRGPRGGAILCKEEYAKAIDKALFPGTQGGPLMHIIAAKAVCFKEALTDEFKEYQKRIVENAKALANALMERGINLVSGGTDNHLMLLDLRNTGITGKELETRLDEVNITCNKNAIPFDPLGPNVTSGVRLGTPAVTTRGMKPEDMVEIADIIVNVIRDENYKEKAKERVANLLKKYPLYEDLI.

Residues Leu119 and 123-125 each bind (6S)-5,6,7,8-tetrahydrofolate; that span reads GHL. Lys228 is modified (N6-(pyridoxal phosphate)lysine). Position 243 (Glu243) interacts with (6S)-5,6,7,8-tetrahydrofolate.

It belongs to the SHMT family. As to quaternary structure, homodimer. Requires pyridoxal 5'-phosphate as cofactor.

The protein localises to the cytoplasm. It carries out the reaction (6R)-5,10-methylene-5,6,7,8-tetrahydrofolate + glycine + H2O = (6S)-5,6,7,8-tetrahydrofolate + L-serine. Its pathway is one-carbon metabolism; tetrahydrofolate interconversion. It participates in amino-acid biosynthesis; glycine biosynthesis; glycine from L-serine: step 1/1. In terms of biological role, catalyzes the reversible interconversion of serine and glycine with tetrahydrofolate (THF) serving as the one-carbon carrier. This reaction serves as the major source of one-carbon groups required for the biosynthesis of purines, thymidylate, methionine, and other important biomolecules. Also exhibits THF-independent aldolase activity toward beta-hydroxyamino acids, producing glycine and aldehydes, via a retro-aldol mechanism. The polypeptide is Serine hydroxymethyltransferase (Thermoanaerobacter pseudethanolicus (strain ATCC 33223 / 39E) (Clostridium thermohydrosulfuricum)).